A 204-amino-acid polypeptide reads, in one-letter code: Octanoyltransferase (204 aa).

Positions 27-204 constitute a BPL/LPL catalytic domain; sequence KNTKDELWIV…LINYVSRNRH (178 aa). Residues 66-73, 133-135, and 146-148 each bind substrate; these read RGGQVTYH, ALG, and GLS. C164 serves as the catalytic Acyl-thioester intermediate.

It belongs to the LipB family.

It localises to the cytoplasm. The enzyme catalyses octanoyl-[ACP] + L-lysyl-[protein] = N(6)-octanoyl-L-lysyl-[protein] + holo-[ACP] + H(+). It functions in the pathway protein modification; protein lipoylation via endogenous pathway; protein N(6)-(lipoyl)lysine from octanoyl-[acyl-carrier-protein]: step 1/2. Its function is as follows. Catalyzes the transfer of endogenously produced octanoic acid from octanoyl-acyl-carrier-protein onto the lipoyl domains of lipoate-dependent enzymes. Lipoyl-ACP can also act as a substrate although octanoyl-ACP is likely to be the physiological substrate. This chain is Octanoyltransferase, found in Vesicomyosocius okutanii subsp. Calyptogena okutanii (strain HA).